Consider the following 161-residue polypeptide: SsrA-binding protein (161 aa).

The tract at residues 140-161 is disordered; sequence KRESIKERDWKRDKQRLLKDRG.

It belongs to the SmpB family.

The protein resides in the cytoplasm. In terms of biological role, required for rescue of stalled ribosomes mediated by trans-translation. Binds to transfer-messenger RNA (tmRNA), required for stable association of tmRNA with ribosomes. tmRNA and SmpB together mimic tRNA shape, replacing the anticodon stem-loop with SmpB. tmRNA is encoded by the ssrA gene; the 2 termini fold to resemble tRNA(Ala) and it encodes a 'tag peptide', a short internal open reading frame. During trans-translation Ala-aminoacylated tmRNA acts like a tRNA, entering the A-site of stalled ribosomes, displacing the stalled mRNA. The ribosome then switches to translate the ORF on the tmRNA; the nascent peptide is terminated with the 'tag peptide' encoded by the tmRNA and targeted for degradation. The ribosome is freed to recommence translation, which seems to be the essential function of trans-translation. The protein is SsrA-binding protein of Sphingopyxis alaskensis (strain DSM 13593 / LMG 18877 / RB2256) (Sphingomonas alaskensis).